A 266-amino-acid polypeptide reads, in one-letter code: Early E1A protein (266 aa).

The tract at residues 39-47 is interaction with RB1 in competition with E2F1; it reads MSLHEMYDL. Residues 94-98 carry the PXLXP motif, interaction with host ZMYND11 motif; sequence PELQP. The LXCXE motif, interaction with host RB1 motif lies at 103–107; that stretch reads LFCYE. Residues 160-180 fold into a zinc finger; it reads CSSCDYHRKTSGCPEILCSLC. The tract at residues 193–244 is disordered; the sequence is VSDSEPDEPDSTTADSNHGSPPTLRCTPPRDLPRPVPVKASPGKRPAVNSLH. Positions 203–212 are enriched in polar residues; sequence STTADSNHGS. A PXDLS motif, CTBP-binding motif is present at residues 255-259; the sequence is PLDLS. A Nuclear localization signal motif is present at residues 261 to 265; sequence KRSRS.

Belongs to the adenoviridae E1A protein family. As to quaternary structure, interacts with host UBE2I; this interaction interferes with polySUMOylation. Interacts with host RB1; this interaction induces the aberrant dissociation of RB1-E2F1 complex thereby disrupting the activity of RB1 and activating E2F1-regulated genes. Interacts with host ATF7; the interaction enhances ATF7-mediated viral transactivation activity which requires the zinc binding domains of both proteins. Isoform early E1A 32 kDa protein and isoform early E1A 26 kDa protein interact (via N-terminus) with CUL1 and E3 ubiquitin ligase RBX1; these interactions inhibit RBX1-CUL1-dependent elongation reaction of ubiquitin chains and attenuate ubiquitination of SCF(FBXW7) target proteins. Interacts (via PXLXP motif) with host ZMYND11/BS69 (via MYND-type zinc finger); this interaction inhibits E1A mediated transactivation. Interacts with host EP300; this interaction stimulates the acetylation of RB1 by recruiting EP300 and RB1 into a multimeric-protein complex. Interacts with host CTBP1 and CTBP2; this interaction seems to potentiate viral replication. Interacts with host DCAF7. Interacts with host DYRK1A. Interacts with host KPNA4; this interaction allows E1A import into the host nucleus. Interacts with host EP400; this interaction stabilizes MYC. Interacts with host TBP protein; this interaction probably disrupts the TBP-TATA complex.

It localises to the host nucleus. Functionally, plays a role in viral genome replication by driving entry of quiescent cells into the cell cycle. Stimulation of progression from G1 to S phase allows the virus to efficiently use the cellular DNA replicating machinery to achieve viral genome replication. E1A protein has both transforming and trans-activating activities. Induces the disassembly of the E2F1 transcription factor from RB1 by direct competition for the same binding site on RB1, with subsequent transcriptional activation of E2F1-regulated S-phase genes and of the E2 region of the adenoviral genome. Release of E2F1 leads to the ARF-mediated inhibition of MDM2 and causes TP53/p53 to accumulate because it is not targeted for degradation by MDM2-mediated ubiquitination anymore. This increase in TP53, in turn, would arrest the cell proliferation and direct its death but this effect is counteracted by the viral protein E1B-55K. Inactivation of the ability of RB1 to arrest the cell cycle is critical for cellular transformation, uncontrolled cellular growth and proliferation induced by viral infection. Interaction with RBX1 and CUL1 inhibits ubiquitination of the proteins targeted by SCF(FBXW7) ubiquitin ligase complex, and may be linked to unregulated host cell proliferation. The tumorigenesis-restraining activity of E1A may be related to the disruption of the host CtBP-CtIP complex through the CtBP binding motif. This is Early E1A protein from Simian adenovirus serotype 7 (SAdV-7).